The following is an 84-amino-acid chain: Small ribosomal subunit protein uS17 (84 aa).

Belongs to the universal ribosomal protein uS17 family. As to quaternary structure, part of the 30S ribosomal subunit.

In terms of biological role, one of the primary rRNA binding proteins, it binds specifically to the 5'-end of 16S ribosomal RNA. The chain is Small ribosomal subunit protein uS17 from Vibrio vulnificus (strain CMCP6).